Here is a 312-residue protein sequence, read N- to C-terminus: Very-long-chain 3-oxoacyl-CoA reductase (312 aa).

The next 3 membrane-spanning stretches (helical) occupy residues 33-53, 181-201, and 274-294; these read VWGI…WAVV, GVIL…LTLY, and HAFM…NLLM. 48–77 provides a ligand contact to NADP(+); it reads GAWAVVTGATDGIGKAYAKELAKRGMKVAL. Ser188 contributes to the substrate binding site. Tyr201 functions as the Proton acceptor in the catalytic mechanism.

Belongs to the short-chain dehydrogenases/reductases (SDR) family. 17-beta-HSD 3 subfamily. Brain.

Its subcellular location is the endoplasmic reticulum membrane. It carries out the reaction a very-long-chain (3R)-3-hydroxyacyl-CoA + NADP(+) = a very-long-chain 3-oxoacyl-CoA + NADPH + H(+). It catalyses the reaction 17beta-estradiol + NAD(+) = estrone + NADH + H(+). The enzyme catalyses 17beta-estradiol + NADP(+) = estrone + NADPH + H(+). The catalysed reaction is 3-oxooctadecanoyl-CoA + NADPH + H(+) = (3R)-hydroxyoctadecanoyl-CoA + NADP(+). It carries out the reaction (7Z,10Z,13Z,16Z)-3-oxodocosatetraenoyl-CoA + NADPH + H(+) = (3R)-hydroxy-(7Z,10Z,13Z,16Z)-docosatetraenoyl-CoA + NADP(+). It catalyses the reaction 3-oxo-(7Z,10Z,13Z,16Z,19Z)-docosapentaenoyl-CoA + NADPH + H(+) = (3R)-hydroxy-(7Z,10Z,13Z,16Z,19Z)-docosapentaenoyl-CoA + NADP(+). The enzyme catalyses (8Z,11Z,14Z)-3-oxoeicosatrienoyl-CoA + NADPH + H(+) = (3R)-hydroxy-(8Z,11Z,14Z)-eicosatrienoyl-CoA + NADP(+). Its pathway is lipid metabolism; fatty acid biosynthesis. It participates in steroid biosynthesis; estrogen biosynthesis. Catalyzes the second of the four reactions of the long-chain fatty acids elongation cycle. This endoplasmic reticulum-bound enzymatic process, allows the addition of two carbons to the chain of long- and very long-chain fatty acids/VLCFAs per cycle. This enzyme has a 3-ketoacyl-CoA reductase activity, reducing 3-ketoacyl-CoA to 3-hydroxyacyl-CoA, within each cycle of fatty acid elongation. Thereby, it may participate in the production of VLCFAs of different chain lengths that are involved in multiple biological processes as precursors of membrane lipids and lipid mediators. May also catalyze the transformation of estrone (E1) into estradiol (E2) and play a role in estrogen formation. In Anas platyrhynchos (Mallard), this protein is Very-long-chain 3-oxoacyl-CoA reductase (HSD17B12).